A 181-amino-acid chain; its full sequence is Probable calcium-binding protein CML43 (181 aa).

EF-hand domains follow at residues Leu24–Asp59, Ser107–Pro142, and Gly145–Pro180. Residues Asp37, Asn39, Asp41, Glu48, Asp120, Asp122, Asp124, Glu131, Asp158, Asn160, Asp162, Arg164, and Glu169 each coordinate Ca(2+).

In terms of tissue distribution, expressed specifically in roots.

Functionally, calcium-binding protein that may mediate calcium-dependent signal during plant defense response. The polypeptide is Probable calcium-binding protein CML43 (CML43) (Arabidopsis thaliana (Mouse-ear cress)).